Here is a 343-residue protein sequence, read N- to C-terminus: MSQDLDQIVADAQAAFAAANDNATLENEKARFLGKTGALTELLKGLGKLDPETRKTEGARINQIKQQVEAALQARRQALADALMNARLAAEAIDVTLPGRAVSRGSLHPVMRTWERVEQIFGSIGFDVADGPEIETDWMNFTALNNPDNHPARSMQDTFYVDGRDSEDKLLLLRTHTSPMQVRYAKMHVEKYAGKAMPPIKVICPGRTYRVDSDATHSPMFNQVEGLWIGEDVSFADLKGVYTDFLRKFFERDDIQVRFRPSYFPFTEPSAEIDMAFGNGKWLEISGSGQVHPNVLRNMGLDPERYIGFAFGSGLERLTMLRYGINDLRLFFEGDVRFLRQFA.

Glutamate 268 serves as a coordination point for Mg(2+).

Belongs to the class-II aminoacyl-tRNA synthetase family. Phe-tRNA synthetase alpha subunit type 1 subfamily. Tetramer of two alpha and two beta subunits. The cofactor is Mg(2+).

Its subcellular location is the cytoplasm. It carries out the reaction tRNA(Phe) + L-phenylalanine + ATP = L-phenylalanyl-tRNA(Phe) + AMP + diphosphate + H(+). The protein is Phenylalanine--tRNA ligase alpha subunit of Cupriavidus necator (strain ATCC 17699 / DSM 428 / KCTC 22496 / NCIMB 10442 / H16 / Stanier 337) (Ralstonia eutropha).